Reading from the N-terminus, the 96-residue chain is Co-chaperonin GroES (96 aa).

Belongs to the GroES chaperonin family. In terms of assembly, heptamer of 7 subunits arranged in a ring. Interacts with the chaperonin GroEL.

The protein resides in the cytoplasm. Together with the chaperonin GroEL, plays an essential role in assisting protein folding. The GroEL-GroES system forms a nano-cage that allows encapsulation of the non-native substrate proteins and provides a physical environment optimized to promote and accelerate protein folding. GroES binds to the apical surface of the GroEL ring, thereby capping the opening of the GroEL channel. This Shewanella loihica (strain ATCC BAA-1088 / PV-4) protein is Co-chaperonin GroES.